Reading from the N-terminus, the 300-residue chain is ADP-polyphosphate phosphotransferase 1 (300 aa).

The protein belongs to the polyphosphate kinase 2 (PPK2) family. Class I subfamily. As to quaternary structure, homotetramer. Requires Mg(2+) as cofactor.

The catalysed reaction is [phosphate](n) + ATP = [phosphate](n+1) + ADP. It carries out the reaction [phosphate](n) + GTP = [phosphate](n+1) + GDP. Its function is as follows. Uses inorganic polyphosphate (polyP) as a donor to convert ADP to ATP. Can also convert GDP to GTP, with lower efficiency. Cannot dephosphorylate ATP in the presence of polyP. The polypeptide is ADP-polyphosphate phosphotransferase 1 (Rhizobium meliloti (strain 1021) (Ensifer meliloti)).